A 297-amino-acid chain; its full sequence is HTH-type transcriptional regulator ArgP (297 aa).

The HTH lysR-type domain occupies 4–60 (PDYRTLQALDAVIRERGFERAAQKLCITQSAVSQRIKQLENMFGQPLLVRTVPPRPT). The H-T-H motif DNA-binding region spans 21-40 (FERAAQKLCITQSAVSQRIK).

It belongs to the LysR transcriptional regulatory family. In terms of assembly, homodimer.

In terms of biological role, controls the transcription of genes involved in arginine and lysine metabolism. The chain is HTH-type transcriptional regulator ArgP from Salmonella choleraesuis (strain SC-B67).